A 660-amino-acid polypeptide reads, in one-letter code: DNA ligase (660 aa).

NAD(+)-binding positions include 33–37 (DFVYD), 82–83 (SL), and glutamate 110. The active-site N6-AMP-lysine intermediate is the lysine 112. Arginine 133, glutamate 167, lysine 281, and lysine 305 together coordinate NAD(+). Zn(2+) contacts are provided by cysteine 396, cysteine 399, cysteine 412, and cysteine 417. The BRCT domain maps to 583–660 (GENKLLAGKK…SFEDIKSYLD (78 aa)).

This sequence belongs to the NAD-dependent DNA ligase family. LigA subfamily. The cofactor is Mg(2+). Mn(2+) is required as a cofactor.

The enzyme catalyses NAD(+) + (deoxyribonucleotide)n-3'-hydroxyl + 5'-phospho-(deoxyribonucleotide)m = (deoxyribonucleotide)n+m + AMP + beta-nicotinamide D-nucleotide.. DNA ligase that catalyzes the formation of phosphodiester linkages between 5'-phosphoryl and 3'-hydroxyl groups in double-stranded DNA using NAD as a coenzyme and as the energy source for the reaction. It is essential for DNA replication and repair of damaged DNA. The protein is DNA ligase of Borreliella burgdorferi (strain ATCC 35210 / DSM 4680 / CIP 102532 / B31) (Borrelia burgdorferi).